A 276-amino-acid polypeptide reads, in one-letter code: Large ribosomal subunit protein uL2c (276 aa).

Positions 223 to 254 (VVKNPIDHPHGGGEGRSPIGRAKPVTPWGQPA) are disordered.

This sequence belongs to the universal ribosomal protein uL2 family. As to quaternary structure, part of the 50S ribosomal subunit.

The protein localises to the plastid. It is found in the chloroplast. The protein is Large ribosomal subunit protein uL2c (rpl2) of Emiliania huxleyi (Coccolithophore).